The chain runs to 617 residues: Proline--tRNA ligase (617 aa).

It belongs to the class-II aminoacyl-tRNA synthetase family. ProS type 1 subfamily. In terms of assembly, homodimer.

It localises to the cytoplasm. The enzyme catalyses tRNA(Pro) + L-proline + ATP = L-prolyl-tRNA(Pro) + AMP + diphosphate. Functionally, catalyzes the attachment of proline to tRNA(Pro) in a two-step reaction: proline is first activated by ATP to form Pro-AMP and then transferred to the acceptor end of tRNA(Pro). As ProRS can inadvertently accommodate and process non-cognate amino acids such as alanine and cysteine, to avoid such errors it has two additional distinct editing activities against alanine. One activity is designated as 'pretransfer' editing and involves the tRNA(Pro)-independent hydrolysis of activated Ala-AMP. The other activity is designated 'posttransfer' editing and involves deacylation of mischarged Ala-tRNA(Pro). The misacylated Cys-tRNA(Pro) is not edited by ProRS. This Streptococcus pneumoniae (strain ATCC 700669 / Spain 23F-1) protein is Proline--tRNA ligase.